A 268-amino-acid chain; its full sequence is Undecaprenyl-diphosphatase (268 aa).

7 consecutive transmembrane segments (helical) span residues 47–67 (FAVLIQLGAILAILALYFSKL), 85–105 (IGVLVAFLPAAVIGAASGGLI), 109–129 (LFNPWVVCFTLILGGGILLWV), 144–164 (FPLPMYLIIGFAQCIAMFPGV), 184–204 (AAEFSFFLAIPTMLGAFVYDL), 217–237 (LIVAVGFAVSFITAIIVVKTF), and 246–266 (FALFAWWRVIVGTLGLIALAL).

The protein belongs to the UppP family.

The protein resides in the cell inner membrane. The catalysed reaction is di-trans,octa-cis-undecaprenyl diphosphate + H2O = di-trans,octa-cis-undecaprenyl phosphate + phosphate + H(+). In terms of biological role, catalyzes the dephosphorylation of undecaprenyl diphosphate (UPP). Confers resistance to bacitracin. The chain is Undecaprenyl-diphosphatase from Rhodopseudomonas palustris (strain BisA53).